A 945-amino-acid chain; its full sequence is Isoleucine--tRNA ligase (945 aa).

Positions P66 to H76 match the 'HIGH' region motif. An L-isoleucyl-5'-AMP-binding site is contributed by E581. The 'KMSKS' region signature appears at K622–S626. K625 lines the ATP pocket. Zn(2+) is bound by residues C908, C911, C928, and C931.

This sequence belongs to the class-I aminoacyl-tRNA synthetase family. IleS type 1 subfamily. Monomer. The cofactor is Zn(2+).

It is found in the cytoplasm. It catalyses the reaction tRNA(Ile) + L-isoleucine + ATP = L-isoleucyl-tRNA(Ile) + AMP + diphosphate. Functionally, catalyzes the attachment of isoleucine to tRNA(Ile). As IleRS can inadvertently accommodate and process structurally similar amino acids such as valine, to avoid such errors it has two additional distinct tRNA(Ile)-dependent editing activities. One activity is designated as 'pretransfer' editing and involves the hydrolysis of activated Val-AMP. The other activity is designated 'posttransfer' editing and involves deacylation of mischarged Val-tRNA(Ile). This chain is Isoleucine--tRNA ligase, found in Burkholderia vietnamiensis (strain G4 / LMG 22486) (Burkholderia cepacia (strain R1808)).